We begin with the raw amino-acid sequence, 358 residues long: Oxidase FUB9 (358 aa).

An FMN hydroxy acid dehydrogenase domain is found at 6-350 (SSKPQIFSIQ…SPAHLSILNA (345 aa)). Tyr-32 contributes to the a 2-oxocarboxylate binding site. Residues Ser-114, Gln-138, and Thr-166 each coordinate FMN. Arg-175 contacts a 2-oxocarboxylate. Lys-221 lines the FMN pocket. The active-site Proton acceptor is His-245. Arg-248 serves as a coordination point for a 2-oxocarboxylate. FMN is bound by residues 276 to 280 (DGGFR) and 299 to 300 (GR).

The protein belongs to the FMN-dependent alpha-hydroxy acid dehydrogenase family. Requires FMN as cofactor.

Its pathway is mycotoxin biosynthesis. Functionally, oxidase; part of the gene cluster that mediates the biosynthesis of fusaric acid, a mycotoxin with low to moderate toxicity to animals and humans, but with high phytotoxic properties. L-aspartate is suggested as fusaric acid amino acid precursor that is activated and further processed to O-acetyl-L-homoserine by cluster enzymes aspartate kinase FUB3 and homoserine O-acetyltransferase FUB5, as well as enzymes of the primary metabolism. The polyketide synthase (PKS) FUB1 generates the triketide trans-2-hexenal which is presumptively released by the hydrolase FUB4 and linked to the NRPS-bound amino acid precursor by NAD(P)-dependent dehydrogenase FUB6. FUB1, FUB4, and the non-canonical NRPS Fub8 may form an enzyme complex. Further processing of the NRPS-bound intermediate might be carried out by FUB6 and the sulfhydrylase FUB7, enabling a spontaneous electrocyclization to close the carbon backbone of fusaric acid. Dihydrofusaric acid is likely to be released via reduction by the thioester reductase (TR) domain of FUB8 whereupon the final oxidation to fusaric acid may (also) be performed by the FMN-dependent dehydrogenase FUB9. This chain is Oxidase FUB9, found in Gibberella fujikuroi (strain CBS 195.34 / IMI 58289 / NRRL A-6831) (Bakanae and foot rot disease fungus).